The chain runs to 63 residues: MTIFDSIALISKSSKSGLTSGNTTSKLNGITVGGNNVSSVNCGGCGGYTNNEPSLYGGNCGCN.

This is Protein sigN172 from Dictyostelium discoideum (Social amoeba).